The primary structure comprises 178 residues: Alkyl hydroperoxide reductase AhpD (178 aa).

The Proton donor role is filled by Cys130. A disulfide bridge links Cys130 with Cys133. The active-site Cysteine sulfenic acid (-SOH) intermediate is the Cys133.

Belongs to the AhpD family. In terms of assembly, homotrimer.

It carries out the reaction N(6)-[(R)-dihydrolipoyl]-L-lysyl-[lipoyl-carrier protein] + a hydroperoxide = N(6)-[(R)-lipoyl]-L-lysyl-[lipoyl-carrier protein] + an alcohol + H2O. Functionally, antioxidant protein with alkyl hydroperoxidase activity. Required for the reduction of the AhpC active site cysteine residues and for the regeneration of the AhpC enzyme activity. The protein is Alkyl hydroperoxide reductase AhpD of Mycobacterium ulcerans (strain Agy99).